A 362-amino-acid chain; its full sequence is Cyclic di-GMP phosphodiesterase PdeL (362 aa).

Positions 18-83 (HLSLPGSVSE…TFWRDIFFQY (66 aa)) constitute an HTH luxR-type domain. Positions 42-61 (VTEISQYRNRSAKTISHQKK) form a DNA-binding region, H-T-H motif. The EAL domain maps to 106 to 360 (HIVTPEAISL…KFISEWVMKA (255 aa)). Position 127 (Gln-127) interacts with substrate. Glu-141 serves as a coordination point for Mg(2+). Substrate-binding positions include 144 to 145 (VR) and Asn-200. 3 residues coordinate Mg(2+): Asn-200, Glu-232, and Asp-262. Residues Asp-262, Lys-286, 319–322 (EGVE), and Tyr-341 contribute to the substrate site.

In terms of assembly, is in a fast thermodynamic monomer-homodimer equilibrium. Dimerization is required for PDE activity. Dimerization affinity is increased about 100-fold upon substrate binding. Requires Mg(2+) as cofactor. The cofactor is Mn(2+).

It carries out the reaction 3',3'-c-di-GMP + H2O = 5'-phosphoguanylyl(3'-&gt;5')guanosine + H(+). Strongly inhibited by Ca(2+). Functionally, acts both as an enzyme and as a c-di-GMP sensor to couple transcriptional activity to the c-di-GMP status of the cell. Phosphodiesterase (PDE) that catalyzes the hydrolysis of cyclic-di-GMP (c-di-GMP) to 5'-pGpG. Also acts as a transcription factor to control its own expression. The polypeptide is Cyclic di-GMP phosphodiesterase PdeL (Escherichia coli (strain K12)).